A 144-amino-acid chain; its full sequence is Oxoglutarate dehydrogenase inhibitor (144 aa).

Thr14 bears the Phosphothreonine mark. Residues 68 to 117 enclose the FHA domain; that stretch reads TAAGRHPDSDIFLDDVTVSRRHAEFRRNGDQYEVVDVGSLNGTYVNREPK.

The protein resides in the cytoplasm. Its function is as follows. An essential component of the PknG signaling pathway. When unphosphorylated, it inhibits the activity of 2-oxoglutarate dehydrogenase. When phosphorylated it does not inhibit 2-oxoglutarate dehydrogenase. The sequence is that of Oxoglutarate dehydrogenase inhibitor (odhI) from Corynebacterium jeikeium (strain K411).